Reading from the N-terminus, the 159-residue chain is Peripheral myelin protein 22 (159 aa).

Position 1 (Met1) is a topological domain, cytoplasmic. The helical transmembrane segment at 2 to 31 (LLLLLGIIVLHVAVLVLLFVATIVSQWIVG) threads the bilayer. The Extracellular portion of the chain corresponds to 32 to 64 (NGHATDLWQNCSTTSGNVQHCLSSSANEWLQSV). A glycan (N-linked (GlcNAc...) asparagine) is linked at Asn41. Residues 65–91 (QATMILSIIFSVLSLFLFFCQLFTLTK) form a helical membrane-spanning segment. Residues 92 to 95 (GGRF) are Cytoplasmic-facing. The chain crosses the membrane as a helical span at residues 96–119 (YITGIFQILAGLCVMSAASIYTVR). At 120–133 (HPEWHLDSAYSYGF) the chain is on the extracellular side. Residues 134-156 (AYILAWVAFPLALLSGVVYVILR) form a helical membrane-spanning segment. At 157–159 (KRE) the chain is on the cytoplasmic side.

This sequence belongs to the PMP-22/EMP/MP20 family. Ubiquitinated by the DCX(DCAF13) E3 ubiquitin ligase complex, leading to its degradation.

The protein resides in the cell membrane. Functionally, might be involved in growth regulation, and in myelinization in the peripheral nervous system. This chain is Peripheral myelin protein 22 (PMP22), found in Equus caballus (Horse).